The sequence spans 512 residues: 23S rRNA (uracil(1939)-C(5))-methyltransferase RlmD (512 aa).

The segment covering 1 to 14 has biased composition (low complexity); that stretch reads MQPTDSKTSTSDTT. Residues 1-45 form a disordered region; the sequence is MQPTDSKTSTSDTTEQPNETQTITIPPSKKKSKPSSKTRRRLKDA. Positions 15 to 25 are enriched in polar residues; sequence EQPNETQTITI. The segment covering 28-42 has biased composition (basic residues); it reads SKKKSKPSSKTRRRL. Positions 41–113 constitute a TRAM domain; sequence RLKDAEPLPF…TSFEEGDAVN (73 aa). Cys-127, Cys-133, Cys-136, and Cys-215 together coordinate [4Fe-4S] cluster. Residues Gln-340, Phe-369, Asn-374, Glu-393, Asp-420, and Asp-441 each coordinate S-adenosyl-L-methionine. Residue Cys-467 is the Nucleophile of the active site.

It belongs to the class I-like SAM-binding methyltransferase superfamily. RNA M5U methyltransferase family. RlmD subfamily.

It catalyses the reaction uridine(1939) in 23S rRNA + S-adenosyl-L-methionine = 5-methyluridine(1939) in 23S rRNA + S-adenosyl-L-homocysteine + H(+). Catalyzes the formation of 5-methyl-uridine at position 1939 (m5U1939) in 23S rRNA. This chain is 23S rRNA (uracil(1939)-C(5))-methyltransferase RlmD, found in Psychrobacter arcticus (strain DSM 17307 / VKM B-2377 / 273-4).